Reading from the N-terminus, the 719-residue chain is Polyphosphate kinase (719 aa).

Asn54 provides a ligand contact to ATP. Arg379 and Arg409 together coordinate Mg(2+). One can recognise a PLD phosphodiesterase domain in the interval Thr434 to Thr468. His439 serves as the catalytic Phosphohistidine intermediate. Positions 472, 568, and 596 each coordinate ATP.

The protein belongs to the polyphosphate kinase 1 (PPK1) family. Requires Mg(2+) as cofactor. Post-translationally, an intermediate of this reaction is the autophosphorylated ppk in which a phosphate is covalently linked to a histidine residue through a N-P bond.

It carries out the reaction [phosphate](n) + ATP = [phosphate](n+1) + ADP. Its function is as follows. Catalyzes the reversible transfer of the terminal phosphate of ATP to form a long-chain polyphosphate (polyP). The chain is Polyphosphate kinase from Staphylococcus saprophyticus subsp. saprophyticus (strain ATCC 15305 / DSM 20229 / NCIMB 8711 / NCTC 7292 / S-41).